The primary structure comprises 103 residues: Large ribosomal subunit protein bL21 (103 aa).

The protein belongs to the bacterial ribosomal protein bL21 family. Part of the 50S ribosomal subunit. Contacts protein L20.

In terms of biological role, this protein binds to 23S rRNA in the presence of protein L20. In Azotobacter vinelandii (strain DJ / ATCC BAA-1303), this protein is Large ribosomal subunit protein bL21.